The following is a 383-amino-acid chain: UDP-D-xylose:L-fucose alpha-1,3-D-xylosyltransferase 3 (383 aa).

Residues 1–20 are Cytoplasmic-facing; that stretch reads MAQQSQRPISNRHISLLNRN. The helical; Signal-anchor for type II membrane protein transmembrane segment at 21–41 threads the bilayer; it reads GLILLLLLALFVILGVFLPLT. Residues 42–383 are Lumenal-facing; that stretch reads KSSLFMFPNT…KNRGKKHKLP (342 aa). N50, N82, and N157 each carry an N-linked (GlcNAc...) asparagine glycan. Positions 180-182 match the DXD motif motif; the sequence is DVD. N-linked (GlcNAc...) asparagine glycosylation is found at N212, N258, N301, N306, N357, and N364.

The protein belongs to the glycosyltransferase 77 family. Mn(2+) serves as cofactor. Mg(2+) is required as a cofactor. Post-translationally, glycosylated. Expressed around trichome support cells in the adaxial epidermis of rosette leaves, in cauline leaves, petals and both the proximal and distal ends of siliques.

The protein localises to the golgi apparatus membrane. Catalyzes the transfer of D-xylose from UDP-alpha-D-xylose onto L-fucose. Probably involved in the biosynthesis of rhamnogalacturonan II (RG-II) through xylosylation of the internal fucose moiety of the A-chain of RG-II, a structurally complex pectic polysaccharide of the primary cell wall. RG-II is essential for the cell wall integrity of rapidly growing tissues such as roots and pollen tube growth and elongation. This is UDP-D-xylose:L-fucose alpha-1,3-D-xylosyltransferase 3 from Arabidopsis thaliana (Mouse-ear cress).